Consider the following 430-residue polypeptide: MLYEKFEYNINNLVGNFGLSKIAIAVSGGSDSVALLYLANIWAEKNNIELFIISVDHNLRAQSKQENYYIQSISNNLKRKYYNLSFDHQNNFSNLQARAREGRYDLMTNLCLELDVLVLLTAHHEDDYVENFCLRLERNSGIFGLSSSNIHWYNNIQIIRPLYNIPKSELVKYLVTNKIKWFEDESNLSDKYRRNIIRQKLFKEENYIKAEISVQQLKTNKLIEDELKPELISAIGEAVKIFEYGFTFLDLVKFDKFSNEVKVQIINFLLIMISGQSRSARFYSIAPILKLISQNVNFKKTVHGCVITRIQNELLIYREFGKKLPKSKILLDKSVIWDNRFCITKNQETPDCVITYLSLEDYKVIKKQLDLKHLKNLSCKNHNAILFTLPIIKILEKVIAIPHISYYDNDMWNFEVSFAPNFVSRFTHFC.

27-32 lines the ATP pocket; sequence SGGSDS.

It belongs to the tRNA(Ile)-lysidine synthase family.

The protein resides in the cytoplasm. The enzyme catalyses cytidine(34) in tRNA(Ile2) + L-lysine + ATP = lysidine(34) in tRNA(Ile2) + AMP + diphosphate + H(+). Functionally, ligates lysine onto the cytidine present at position 34 of the AUA codon-specific tRNA(Ile) that contains the anticodon CAU, in an ATP-dependent manner. Cytidine is converted to lysidine, thus changing the amino acid specificity of the tRNA from methionine to isoleucine. The polypeptide is tRNA(Ile)-lysidine synthase (Rickettsia typhi (strain ATCC VR-144 / Wilmington)).